Consider the following 216-residue polypeptide: Ribosomal RNA large subunit methyltransferase E (216 aa).

Residues Gly-67, Trp-69, Asp-87, Asp-103, and Asp-128 each coordinate S-adenosyl-L-methionine. Lys-168 functions as the Proton acceptor in the catalytic mechanism.

It belongs to the class I-like SAM-binding methyltransferase superfamily. RNA methyltransferase RlmE family.

It localises to the cytoplasm. The enzyme catalyses uridine(2552) in 23S rRNA + S-adenosyl-L-methionine = 2'-O-methyluridine(2552) in 23S rRNA + S-adenosyl-L-homocysteine + H(+). In terms of biological role, specifically methylates the uridine in position 2552 of 23S rRNA at the 2'-O position of the ribose in the fully assembled 50S ribosomal subunit. This chain is Ribosomal RNA large subunit methyltransferase E, found in Acinetobacter baumannii (strain AB307-0294).